The sequence spans 355 residues: UDP-N-acetylglucosamine--N-acetylmuramyl-(pentapeptide) pyrophosphoryl-undecaprenol N-acetylglucosamine transferase (355 aa).

Residues 15–17 (TGG), N127, R163, S191, I244, 263–268 (ALTVSE), and Q288 each bind UDP-N-acetyl-alpha-D-glucosamine.

The protein belongs to the glycosyltransferase 28 family. MurG subfamily.

It is found in the cell inner membrane. The catalysed reaction is di-trans,octa-cis-undecaprenyl diphospho-N-acetyl-alpha-D-muramoyl-L-alanyl-D-glutamyl-meso-2,6-diaminopimeloyl-D-alanyl-D-alanine + UDP-N-acetyl-alpha-D-glucosamine = di-trans,octa-cis-undecaprenyl diphospho-[N-acetyl-alpha-D-glucosaminyl-(1-&gt;4)]-N-acetyl-alpha-D-muramoyl-L-alanyl-D-glutamyl-meso-2,6-diaminopimeloyl-D-alanyl-D-alanine + UDP + H(+). It participates in cell wall biogenesis; peptidoglycan biosynthesis. Its function is as follows. Cell wall formation. Catalyzes the transfer of a GlcNAc subunit on undecaprenyl-pyrophosphoryl-MurNAc-pentapeptide (lipid intermediate I) to form undecaprenyl-pyrophosphoryl-MurNAc-(pentapeptide)GlcNAc (lipid intermediate II). The polypeptide is UDP-N-acetylglucosamine--N-acetylmuramyl-(pentapeptide) pyrophosphoryl-undecaprenol N-acetylglucosamine transferase (Escherichia coli O157:H7).